A 778-amino-acid polypeptide reads, in one-letter code: MSEMQQPWSLVGLTEAEYRRVVEILGREPNPTELHMFGVMWSEHCAYKHSKAALRRLPTRGEHVLQGPGENAGVVRIDDDLAVAFKLESHNHPSFVDPFNGAATGVGGILRDVFTMGARPVATLNSLRFGPLDEPKQRELLRGVVAGIGHYGNTVGVPCIGGEVYFDESYRGNCLVNAMCIGILRPDRIHRGIAAGPGNAIMVVGNPTGRDGIHAASLLASAEFSGSEAEAALPTVPVGDPFAEKMLMEACLELFETDAVVGIQDMGAAGLISSSSEMAARGGVGVELDVRKVPAREEGMEPWEFLLSESQERMLVCVKKGREAEVEAICRKWGVGCAVIGRVTDDGMVRVLDDGRVVAEVPARALAEAPVYHPAKAEPAYLAELRAFDWSRLPEPEDWNETLLRLLGSPNIGARAWIYEQFDHMVQAGTVLGPGGDAGVIRLGAAVAPGAHGLTRQPPGEGLPGRSGQAGPPKGIAASVDCNGRYVYLNPRRGTAIAVAEAARNCVVTGARPVAITNNCNFGNPEKPEIFWTFDEAITGMAEACEALGTPVTGGNVSFYNETSGEAIHPTPTIGMIAVHENLDRLTTPGFKQVGDVILLLGETRDELGGSEYARLIHGVLAGDAPALDLAFEKRLQDVVLRAIHEGLVTAAHDVAEGGLAVALAEMAIAAAEPSLGCQVSIFLGEGRVDGQLFGESQSRILVTATREQVGRLQALLMVEQIPFRVLGDVTADGRFRLAALAPGSGSAHVYRRQELIDLPVADLVRAHKEAIPRWMDA.

His-44 is an active-site residue. 2 residues coordinate ATP: Tyr-47 and Lys-86. Glu-88 is a binding site for Mg(2+). Substrate is bound by residues 89 to 92 (SHNH) and Arg-111. His-90 serves as the catalytic Proton acceptor. Asp-112 and Asp-265 together coordinate Mg(2+). 309–311 (ESQ) serves as a coordination point for substrate. Residues 455–474 (TRQPPGEGLPGRSGQAGPPK) are disordered. ATP contacts are provided by Asn-518 and Gly-555. Mg(2+) is bound at residue Asn-556. Substrate is bound at residue Ser-558.

This sequence belongs to the FGAMS family. In terms of assembly, monomer. Part of the FGAM synthase complex composed of 1 PurL, 1 PurQ and 2 PurS subunits.

Its subcellular location is the cytoplasm. The catalysed reaction is N(2)-formyl-N(1)-(5-phospho-beta-D-ribosyl)glycinamide + L-glutamine + ATP + H2O = 2-formamido-N(1)-(5-O-phospho-beta-D-ribosyl)acetamidine + L-glutamate + ADP + phosphate + H(+). Its pathway is purine metabolism; IMP biosynthesis via de novo pathway; 5-amino-1-(5-phospho-D-ribosyl)imidazole from N(2)-formyl-N(1)-(5-phospho-D-ribosyl)glycinamide: step 1/2. Its function is as follows. Part of the phosphoribosylformylglycinamidine synthase complex involved in the purines biosynthetic pathway. Catalyzes the ATP-dependent conversion of formylglycinamide ribonucleotide (FGAR) and glutamine to yield formylglycinamidine ribonucleotide (FGAM) and glutamate. The FGAM synthase complex is composed of three subunits. PurQ produces an ammonia molecule by converting glutamine to glutamate. PurL transfers the ammonia molecule to FGAR to form FGAM in an ATP-dependent manner. PurS interacts with PurQ and PurL and is thought to assist in the transfer of the ammonia molecule from PurQ to PurL. In Symbiobacterium thermophilum (strain DSM 24528 / JCM 14929 / IAM 14863 / T), this protein is Phosphoribosylformylglycinamidine synthase subunit PurL.